Reading from the N-terminus, the 185-residue chain is Protein GrpE (185 aa).

The interval 1-37 is disordered; the sequence is MEEQEEKQYNQNIQDNEEGTQMREELQESTSAQQTLQ. A compositionally biased stretch (polar residues) spans 28–37; sequence ESTSAQQTLQ.

Belongs to the GrpE family. In terms of assembly, homodimer.

The protein localises to the cytoplasm. Functionally, participates actively in the response to hyperosmotic and heat shock by preventing the aggregation of stress-denatured proteins, in association with DnaK and GrpE. It is the nucleotide exchange factor for DnaK and may function as a thermosensor. Unfolded proteins bind initially to DnaJ; upon interaction with the DnaJ-bound protein, DnaK hydrolyzes its bound ATP, resulting in the formation of a stable complex. GrpE releases ADP from DnaK; ATP binding to DnaK triggers the release of the substrate protein, thus completing the reaction cycle. Several rounds of ATP-dependent interactions between DnaJ, DnaK and GrpE are required for fully efficient folding. In Helicobacter hepaticus (strain ATCC 51449 / 3B1), this protein is Protein GrpE.